The chain runs to 398 residues: Succinate--CoA ligase [ADP-forming] subunit beta (398 aa).

One can recognise an ATP-grasp domain in the interval 9-253; that stretch reads KELLKSYGVA…EAEEDPKELE (245 aa). ATP is bound by residues Lys46, 53–55, Glu108, Cys111, and Glu116; that span reads GRG. Residues Asn208 and Asp222 each contribute to the Mg(2+) site. Substrate-binding positions include Asn273 and 330–332; that span reads GIM.

It belongs to the succinate/malate CoA ligase beta subunit family. As to quaternary structure, heterotetramer of two alpha and two beta subunits. Requires Mg(2+) as cofactor.

The catalysed reaction is succinate + ATP + CoA = succinyl-CoA + ADP + phosphate. The enzyme catalyses GTP + succinate + CoA = succinyl-CoA + GDP + phosphate. It functions in the pathway carbohydrate metabolism; tricarboxylic acid cycle; succinate from succinyl-CoA (ligase route): step 1/1. Functionally, succinyl-CoA synthetase functions in the citric acid cycle (TCA), coupling the hydrolysis of succinyl-CoA to the synthesis of either ATP or GTP and thus represents the only step of substrate-level phosphorylation in the TCA. The beta subunit provides nucleotide specificity of the enzyme and binds the substrate succinate, while the binding sites for coenzyme A and phosphate are found in the alpha subunit. This chain is Succinate--CoA ligase [ADP-forming] subunit beta, found in Acidiphilium cryptum (strain JF-5).